The chain runs to 276 residues: Sulfur carrier protein FdhD (276 aa).

C122 acts as the Cysteine persulfide intermediate in catalysis. 259–264 (FCKPGK) serves as a coordination point for Mo-bis(molybdopterin guanine dinucleotide).

This sequence belongs to the FdhD family.

The protein resides in the cytoplasm. Functionally, required for formate dehydrogenase (FDH) activity. Acts as a sulfur carrier protein that transfers sulfur from IscS to the molybdenum cofactor prior to its insertion into FDH. This is Sulfur carrier protein FdhD from Photorhabdus laumondii subsp. laumondii (strain DSM 15139 / CIP 105565 / TT01) (Photorhabdus luminescens subsp. laumondii).